Here is a 246-residue protein sequence, read N- to C-terminus: Bis(5'-nucleosyl)-tetraphosphatase PrpE [asymmetrical] (246 aa).

The protein belongs to the PrpE family. It depends on Ni(2+) as a cofactor.

It catalyses the reaction P(1),P(4)-bis(5'-guanosyl) tetraphosphate + H2O = GMP + GTP + 2 H(+). In terms of biological role, asymmetrically hydrolyzes Ap4p to yield AMP and ATP. The sequence is that of Bis(5'-nucleosyl)-tetraphosphatase PrpE [asymmetrical] from Bacillus cereus (strain ATCC 14579 / DSM 31 / CCUG 7414 / JCM 2152 / NBRC 15305 / NCIMB 9373 / NCTC 2599 / NRRL B-3711).